The primary structure comprises 375 residues: Hemolysin BL-binding component (375 aa).

The signal sequence occupies residues Met1–Ala31. The helical transmembrane segment at Phe232–Val252 threads the bilayer.

Composed of a binding component, B, and two lytic components, L1 and L2. All three subunits act synergically to cause hemolysis.

The protein resides in the secreted. It localises to the host cell membrane. In terms of biological role, cytotoxic protein, part of the enterotoxin complex. Responsible for binding to erythrocytes. This enterotoxin is thought to be the cause of the diarrheal form of gastroenteritis caused by food-borne strains of B.cereus. The chain is Hemolysin BL-binding component (hblA) from Bacillus cereus.